A 1066-amino-acid polypeptide reads, in one-letter code: Ubiquitin conjugation factor E4 A (1066 aa).

The tract at residues 33 to 57 is disordered; the sequence is KEQLKQQSDELPASPDDSDNSVSES. At Lys-386 the chain carries N6-acetyllysine. In terms of domain architecture, U-box spans 987–1061; that stretch reads DACDEFLDPI…QRWLAERKQQ (75 aa).

The protein belongs to the ubiquitin conjugation factor E4 family.

The protein resides in the cytoplasm. It catalyses the reaction S-ubiquitinyl-[E2 ubiquitin-conjugating enzyme]-L-cysteine + [acceptor protein]-L-lysine = [E2 ubiquitin-conjugating enzyme]-L-cysteine + N(6)-ubiquitinyl-[acceptor protein]-L-lysine.. It functions in the pathway protein modification; protein ubiquitination. Functionally, ubiquitin-protein ligase that probably functions as an E3 ligase in conjunction with specific E1 and E2 ligases. May also function as an E4 ligase mediating the assembly of polyubiquitin chains on substrates ubiquitinated by another E3 ubiquitin ligase. Mediates 'Lys-48'-linked polyubiquitination of substrates. In Pongo abelii (Sumatran orangutan), this protein is Ubiquitin conjugation factor E4 A.